The following is a 665-amino-acid chain: DNA ligase (665 aa).

Residues 31–35 (DQEFD), 80–81 (SL), and glutamate 110 each bind NAD(+). The active-site N6-AMP-lysine intermediate is the lysine 112. 4 residues coordinate NAD(+): arginine 133, glutamate 170, lysine 285, and lysine 309. Residues cysteine 403, cysteine 406, cysteine 421, and cysteine 427 each coordinate Zn(2+). Residues 587 to 665 (EHTDKLAGKS…SEEEFLQMIE (79 aa)) enclose the BRCT domain.

Belongs to the NAD-dependent DNA ligase family. LigA subfamily. Requires Mg(2+) as cofactor. The cofactor is Mn(2+).

The enzyme catalyses NAD(+) + (deoxyribonucleotide)n-3'-hydroxyl + 5'-phospho-(deoxyribonucleotide)m = (deoxyribonucleotide)n+m + AMP + beta-nicotinamide D-nucleotide.. DNA ligase that catalyzes the formation of phosphodiester linkages between 5'-phosphoryl and 3'-hydroxyl groups in double-stranded DNA using NAD as a coenzyme and as the energy source for the reaction. It is essential for DNA replication and repair of damaged DNA. The polypeptide is DNA ligase (Phocaeicola vulgatus (strain ATCC 8482 / DSM 1447 / JCM 5826 / CCUG 4940 / NBRC 14291 / NCTC 11154) (Bacteroides vulgatus)).